A 2476-amino-acid polypeptide reads, in one-letter code: Zonadhesin (2476 aa).

The first 29 residues, Met1–Ser29, serve as a signal peptide directing secretion. At Phe30–Arg2418 the chain is on the extracellular side. MAM domains are found at residues Pro31 to Glu144 and Pro147 to Gly312. Asn109 and Asn269 each carry an N-linked (GlcNAc...) asparagine glycan. Disordered stretches follow at residues Pro313–Val332, Pro358–Thr462, and Glu537–Ile632. Positions Ser319–Ile687 are 53 X approximate heptapeptide repeats (mucin-like domain). Residues Pro358–Thr373 show a composition bias toward low complexity. The segment covering Thr400–Gly412 has biased composition (pro residues). The segment covering His423 to Lys433 has biased composition (basic and acidic residues). Positions Pro451–Thr462 are enriched in low complexity. One can recognise a TIL 1 domain in the interval Cys690–Cys739. N-linked (GlcNAc...) asparagine glycans are attached at residues Asn735, Asn758, and Asn833. The VWFC 1 domain maps to Asp740 to His794. The VWFD 1 domain occupies Ala799–Glu976. Cystine bridges form between Cys801–Cys936 and Cys823–Cys975. A disordered region spans residues Ser943 to Pro983. The 54-residue stretch at Cys1070 to Cys1123 folds into the TIL 2 domain. The 57-residue stretch at Gly1124–Ala1180 folds into the VWFC 2 domain. An N-linked (GlcNAc...) asparagine glycan is attached at Asn1154. Positions Ala1184–Phe1364 constitute a VWFD 2 domain. 2 disulfides stabilise this stretch: Cys1186-Cys1324 and Cys1208-Cys1363. Asn1329 and Asn1448 each carry an N-linked (GlcNAc...) asparagine glycan. In terms of domain architecture, TIL 3 spans Cys1456–Cys1511. The 57-residue stretch at Gly1512–Arg1568 folds into the VWFC 3 domain. Asn1544, Asn1596, and Asn1654 each carry an N-linked (GlcNAc...) asparagine glycan. Residues Gly1573–Gln1751 enclose the VWFD 3 domain. 2 disulfides stabilise this stretch: Cys1575/Cys1712 and Cys1597/Cys1750. Residues Asp1747–Ala1759 show a composition bias toward basic and acidic residues. The interval Asp1747–Asn1768 is disordered. N-linked (GlcNAc...) asparagine glycosylation is present at Asn1843. A TIL 4 domain is found at Cys1851–Cys1907. Positions Gly1908–Gln1963 constitute a VWFC 4 domain. Asn1965 carries N-linked (GlcNAc...) asparagine glycosylation. Residues Asn1968–Pro2145 form the VWFD 4 domain. Residues Cys1970 and Cys2107 are joined by a disulfide bond. Residues Asn2122, Asn2165, and Asn2178 are each glycosylated (N-linked (GlcNAc...) asparagine). In terms of domain architecture, TIL 5 spans Cys2257–Cys2310. A VWFC 5 domain is found at Gly2311 to Phe2365. N-linked (GlcNAc...) asparagine glycosylation is found at Asn2329 and Asn2359. Residues Arg2366–Thr2402 form the EGF-like domain. Disulfide bonds link Cys2370/Cys2381, Cys2375/Cys2390, and Cys2392/Cys2401. Residues Val2419 to Val2439 form a helical membrane-spanning segment. Residues Arg2438–Ala2476 are disordered. Over residues Val2439 to Ser2450 the composition is skewed to basic residues. The Cytoplasmic segment spans residues Ser2440–Ala2476.

Probably forms covalent oligomers. In terms of processing, the MAM domains and the mucin-like domains are missing from the zonadhesin that binds to the egg extracellular matrix. Processing might occur during sperm maturation and/or capacitation. In terms of tissue distribution, in testis, primarily in haploid spermatids. Not in lung, liver, heart, spleen, brain, kidney, epididymis.

Its subcellular location is the cell membrane. Its function is as follows. Binds in a species-specific manner to the zona pellucida of the egg. May be involved in gamete recognition and/or signaling. In Sus scrofa (Pig), this protein is Zonadhesin (ZAN).